The chain runs to 148 residues: UPF0178 protein DP1304 (148 aa).

The protein belongs to the UPF0178 family.

This chain is UPF0178 protein DP1304, found in Desulfotalea psychrophila (strain LSv54 / DSM 12343).